The primary structure comprises 427 residues: Isocitrate lyase (427 aa).

Residue 89–91 (SGW) participates in substrate binding. Aspartate 150 serves as a coordination point for Mg(2+). The active-site Proton acceptor is cysteine 188. Substrate contacts are provided by residues 189–190 (GH), arginine 225, 310–314 (NCSPS), and threonine 344.

It belongs to the isocitrate lyase/PEP mutase superfamily. Isocitrate lyase family. As to quaternary structure, homotetramer. Mg(2+) serves as cofactor.

It carries out the reaction D-threo-isocitrate = glyoxylate + succinate. It participates in carbohydrate metabolism; glyoxylate cycle; (S)-malate from isocitrate: step 1/2. In terms of biological role, involved in the metabolic adaptation in response to environmental changes. Catalyzes the reversible formation of succinate and glyoxylate from isocitrate, a key step of the glyoxylate cycle, which operates as an anaplerotic route for replenishing the tricarboxylic acid cycle during growth on fatty acid substrates. The sequence is that of Isocitrate lyase (aceA) from Halalkalibacterium halodurans (strain ATCC BAA-125 / DSM 18197 / FERM 7344 / JCM 9153 / C-125) (Bacillus halodurans).